A 662-amino-acid chain; its full sequence is Glycogen debranching enzyme (662 aa).

The Nucleophile role is filled by aspartate 338. The Proton donor role is filled by glutamate 373.

The protein belongs to the glycosyl hydrolase 13 family.

It catalyses the reaction Hydrolysis of (1-&gt;6)-alpha-D-glucosidic linkages to branches with degrees of polymerization of three or four glucose residues in limit dextrin.. Its pathway is glycan degradation; glycogen degradation. Its function is as follows. Removes maltotriose and maltotetraose chains that are attached by 1,6-alpha-linkage to the limit dextrin main chain, generating a debranched limit dextrin. The chain is Glycogen debranching enzyme from Yersinia pseudotuberculosis serotype O:1b (strain IP 31758).